Reading from the N-terminus, the 143-residue chain is Transcriptional regulator MraZ (143 aa).

SpoVT-AbrB domains follow at residues 5–47 (EYKH…SLKE) and 76–119 (ACEC…SEEN).

Belongs to the MraZ family. Forms oligomers.

The protein resides in the cytoplasm. Its subcellular location is the nucleoid. This chain is Transcriptional regulator MraZ, found in Caldicellulosiruptor saccharolyticus (strain ATCC 43494 / DSM 8903 / Tp8T 6331).